The following is a 146-amino-acid chain: Large ribosomal subunit protein uL13 (146 aa).

This sequence belongs to the universal ribosomal protein uL13 family. Part of the 50S ribosomal subunit.

This protein is one of the early assembly proteins of the 50S ribosomal subunit, although it is not seen to bind rRNA by itself. It is important during the early stages of 50S assembly. The protein is Large ribosomal subunit protein uL13 of Sulfurisphaera tokodaii (strain DSM 16993 / JCM 10545 / NBRC 100140 / 7) (Sulfolobus tokodaii).